Reading from the N-terminus, the 377-residue chain is Nitric oxide reductase FlRd-NAD(+) reductase (377 aa).

It belongs to the FAD-dependent oxidoreductase family. The cofactor is FAD.

The protein localises to the cytoplasm. It carries out the reaction 2 reduced [nitric oxide reductase rubredoxin domain] + NAD(+) + H(+) = 2 oxidized [nitric oxide reductase rubredoxin domain] + NADH. It participates in nitrogen metabolism; nitric oxide reduction. Its function is as follows. One of at least two accessory proteins for anaerobic nitric oxide (NO) reductase. Reduces the rubredoxin moiety of NO reductase. The protein is Nitric oxide reductase FlRd-NAD(+) reductase of Escherichia coli O139:H28 (strain E24377A / ETEC).